A 266-amino-acid chain; its full sequence is 3',5'-cyclic-nucleotide phosphodiesterase alr5338 (266 aa).

Positions 14, 16, 56, 86, 155, 194, and 196 each coordinate Fe cation. AMP contacts are provided by residues H16, D56, and 86–87 (NH). H196 contributes to the AMP binding site.

This sequence belongs to the cyclic nucleotide phosphodiesterase class-III family. Fe(2+) is required as a cofactor. Requires Mn(2+) as cofactor.

It carries out the reaction a nucleoside 3',5'-cyclic phosphate + H2O = a nucleoside 5'-phosphate + H(+). The catalysed reaction is 3',5'-cyclic AMP + H2O = AMP + H(+). It catalyses the reaction 3',5'-cyclic GMP + H2O = GMP + H(+). Its activity is regulated as follows. Activated by iron and manganese. Its function is as follows. Hydrolyzes cAMP to 5'-AMP. Plays an important regulatory role in modulating the intracellular concentration of cAMP, thereby influencing cAMP-dependent processes. Can also hydrolyze cGMP. The protein is 3',5'-cyclic-nucleotide phosphodiesterase alr5338 of Nostoc sp. (strain PCC 7120 / SAG 25.82 / UTEX 2576).